Here is a 2057-residue protein sequence, read N- to C-terminus: Rho guanine nucleotide exchange factor 17 (2057 aa).

Disordered stretches follow at residues 20–361 (ERWS…DTGG), 375–461 (LASP…SNPD), and 481–559 (RVRK…LKPS). Phosphoserine is present on residues Ser142 and Ser152. Over residues 227–249 (ARASSSSSIASSYPVSRSRAASS) the composition is skewed to low complexity. Residues Ser305 and Ser308 each carry the phosphoserine modification. A compositionally biased stretch (gly residues) spans 314–323 (GGLGSAGGVG). Ser324, Ser330, Ser377, Ser381, Ser389, Ser404, and Ser414 each carry phosphoserine. The span at 382 to 391 (RGSSRYSSTE) shows a compositional bias: polar residues. Basic and acidic residues predominate over residues 440–451 (PLRDGGLDLDKN). Ser456 bears the Phosphoserine mark. The segment covering 507–524 (EQSESTLSQSPTSPTTRP) has biased composition (low complexity). 2 positions are modified to phosphoserine: Ser538 and Ser611. Disordered regions lie at residues 615–647 (AGDM…PEPL) and 663–952 (LSST…VRHA). Residues 663–672 (LSSTSAQTNH) show a composition bias toward polar residues. Ser689 is modified (phosphoserine). Residues Thr692 and Thr695 each carry the phosphothreonine modification. The span at 710–719 (PNGTELSNGE) shows a compositional bias: polar residues. At Ser728 the chain carries Phosphoserine. A compositionally biased stretch (polar residues) spans 747–760 (SVDSNLLGSLNSKT). The span at 820 to 829 (SLSDPSRRGE) shows a compositional bias: basic and acidic residues. Position 906 is a phosphoserine (Ser906). Positions 909 to 920 (LTRRGSKKRPAR) are enriched in basic residues. A compositionally biased stretch (basic and acidic residues) spans 922-931 (SHQELRREEG). The segment covering 933–944 (QDQTGSLTQTRS) has biased composition (polar residues). Phosphoserine occurs at positions 953 and 994. A compositionally biased stretch (pro residues) spans 1015-1027 (GPVDLPCLPPSAP). Positions 1015 to 1054 (GPVDLPCLPPSAPPSTETKPSGAARATPDEPAPASKCCSK) are disordered. The DH domain occupies 1059–1247 (MRKHVTMTLL…KQVAERINKG (189 aa)). Phosphoserine is present on Ser1324. Disordered stretches follow at residues 1555 to 1713 (RCPR…SSRG) and 1983 to 2050 (CSTP…DSTN). Residues 1579-1589 (LDVEATAEEEA) show a composition bias toward acidic residues. Positions 1638-1674 (SPSPSGTLQSQASQSTISSSFGNEETPSSKEATAETT) are enriched in low complexity.

In terms of biological role, acts as a guanine nucleotide exchange factor (GEF) for RhoA GTPases. This chain is Rho guanine nucleotide exchange factor 17 (Arhgef17), found in Mus musculus (Mouse).